A 1537-amino-acid polypeptide reads, in one-letter code: Isocyanide synthase-NRPS hybrid crmA (1537 aa).

The tract at residues 1 to 502 (MFHKEAGISH…CVKAGYAALF (502 aa)) is isocyanide synthase domain. A disordered region spans residues 351 to 391 (PSVPVSPGMSSPSAASTSSSGASMQGSAATTPETHSPPTFT). Residues 352–381 (SVPVSPGMSSPSAASTSSSGASMQGSAATT) are compositionally biased toward low complexity. Positions 382 to 391 (PETHSPPTFT) are enriched in polar residues. The adenylation stretch occupies residues 573–752 (EAINDPFCFL…GNLIPPREDW (180 aa)). The region spanning 941–1019 (SSAHSIEDNV…RLSAIIALLA (79 aa)) is the Carrier domain. O-(pantetheine 4'-phosphoryl)serine is present on S977. Positions 1293 to 1526 (RCLKTTMFLV…LEMLVTDEEF (234 aa)) are transferase.

It in the N-terminal section; belongs to the isocyanide synthase family. The protein in the C-terminal section; belongs to the NRP synthetase family.

The protein operates within secondary metabolite biosynthesis. Functionally, isocyanide synthase-NRPS hybrid; part of the crm gene cluster that mediates the biosynthesis of a yet unidentified copper-responsive metabolite. Converts valine into valine isocyanide that then contributes to two distinct biosynthetic pathways under copper-limiting conditions. Reaction of valine isocyanide with the imine intermediate of festuclavine results in formation of the amide bond in fumivaline A. In addition, valine isocyanide contributes to biosynthesis of a family of acylated sugar alcohols, the D-mannitol-derived fumicicolins. CrmA and associated products inhibit microbial growth from copper-starved A.fumigatus. The chain is Isocyanide synthase-NRPS hybrid crmA from Aspergillus fumigatus (strain ATCC MYA-4609 / CBS 101355 / FGSC A1100 / Af293) (Neosartorya fumigata).